A 911-amino-acid polypeptide reads, in one-letter code: Valine--tRNA ligase (911 aa).

The short motif at 57-67 (PTVSGSLHVGH) is the 'HIGH' region element. The 'KMSKS' region signature appears at 599–603 (KMSKS). An ATP-binding site is contributed by Lys602. The disordered stretch occupies residues 882–911 (EESAAEDAPETEVAVEASELGEPPVKKPKH).

The protein belongs to the class-I aminoacyl-tRNA synthetase family. ValS type 2 subfamily. In terms of assembly, monomer.

It localises to the cytoplasm. The catalysed reaction is tRNA(Val) + L-valine + ATP = L-valyl-tRNA(Val) + AMP + diphosphate. Functionally, catalyzes the attachment of valine to tRNA(Val). As ValRS can inadvertently accommodate and process structurally similar amino acids such as threonine, to avoid such errors, it has a 'posttransfer' editing activity that hydrolyzes mischarged Thr-tRNA(Val) in a tRNA-dependent manner. This is Valine--tRNA ligase from Bifidobacterium longum subsp. infantis (strain ATCC 15697 / DSM 20088 / JCM 1222 / NCTC 11817 / S12).